We begin with the raw amino-acid sequence, 527 residues long: Flagellar radial spoke protein 5 (527 aa).

Positions 1–22 are disordered; the sequence is MSEPGEEPVAAPAGPAPDPVLN. Positions 101 to 153 form a coiled coil; that stretch reads RKWNELTIQAKQLEQEVAGLKGPDAEAKQAELENVKVQIADAEAAVAEVKQSF. 2 positions are modified to asymmetric dimethylarginine: R191 and R366.

Belongs to the aldo/keto reductase family. Post-translationally, asymmetrically dimethylated at Arg-191 and Arg-366 during flagellum resorption. Probably methylated by PRMT1.

The protein resides in the cytoplasm. The protein localises to the cytoskeleton. Its subcellular location is the flagellum axoneme. Flagellar radial spokes contribute to the regulation of dynein arm activity and thus the pattern of flagellar bending. They consist of a thin stalk, which is attached to the a subfiber of the outer doublet microtubule, and a bulbous head, which is attached to the stalk and appears to interact with the projections from the central pair of microtubules. The sequence is that of Flagellar radial spoke protein 5 from Chlamydomonas reinhardtii (Chlamydomonas smithii).